Reading from the N-terminus, the 465-residue chain is UDP-N-acetylmuramate--L-alanine ligase (465 aa).

G125–T131 serves as a coordination point for ATP.

Belongs to the MurCDEF family.

It is found in the cytoplasm. It carries out the reaction UDP-N-acetyl-alpha-D-muramate + L-alanine + ATP = UDP-N-acetyl-alpha-D-muramoyl-L-alanine + ADP + phosphate + H(+). It functions in the pathway cell wall biogenesis; peptidoglycan biosynthesis. Cell wall formation. The protein is UDP-N-acetylmuramate--L-alanine ligase of Deinococcus geothermalis (strain DSM 11300 / CIP 105573 / AG-3a).